The sequence spans 891 residues: von Willebrand factor A domain-containing protein 7 (891 aa).

The signal sequence occupies residues M1–A28. A glycan (N-linked (GlcNAc...) asparagine) is linked at N55. A disordered region spans residues P238–P273. Residues A314–M499 enclose the VWFA domain.

In terms of tissue distribution, expressed at low level in many tissues.

The protein localises to the secreted. The chain is von Willebrand factor A domain-containing protein 7 (Vwa7) from Mus musculus (Mouse).